A 559-amino-acid polypeptide reads, in one-letter code: 5-epiaristolochene synthase (559 aa).

Mg(2+) is bound by residues Asp-312, Asp-316, Asp-455, Thr-459, and Glu-463. The DDXXD motif signature appears at 312–316; that stretch reads DDTYD.

It belongs to the terpene synthase family. Monomer. Mg(2+) serves as cofactor. In terms of tissue distribution, expressed only in treated leaves an not detected in control leaves.

The protein localises to the cytoplasm. The catalysed reaction is (2E,6E)-farnesyl diphosphate = (+)-5-epi-aristolochene + diphosphate. Its pathway is secondary metabolite biosynthesis; terpenoid biosynthesis. Its function is as follows. Catalyzes the cyclization of trans,trans-farnesyl diphosphate (FPP) to the bicyclic intermediate 5-epi-aristolochene, initial step in the conversion of FPP to the sesquiterpenoid antifungal phytoalexin capsidiol. Produces germacrene A as an enzyme-bound intermediate that is not released by the enzyme, but is further cyclized to produce the bicyclic 5-epi-aristolochene. The polypeptide is 5-epiaristolochene synthase (EAS) (Capsicum annuum (Capsicum pepper)).